The primary structure comprises 337 residues: Ferredoxin--NADP reductase (337 aa).

Aspartate 35, glutamine 43, tyrosine 48, alanine 88, phenylalanine 122, aspartate 289, and threonine 330 together coordinate FAD.

This sequence belongs to the ferredoxin--NADP reductase type 2 family. As to quaternary structure, homodimer. FAD is required as a cofactor.

It catalyses the reaction 2 reduced [2Fe-2S]-[ferredoxin] + NADP(+) + H(+) = 2 oxidized [2Fe-2S]-[ferredoxin] + NADPH. The chain is Ferredoxin--NADP reductase from Ehrlichia ruminantium (strain Welgevonden).